The following is a 294-amino-acid chain: Protoheme IX farnesyltransferase (294 aa).

8 helical membrane passes run 19–39 (PKQTFLLLLTSIFTYVGAGGM), 41–61 (LDALLLLTAAMLLSISGTTSV), 89–109 (VEALSFGLLLFIVGLGLSYLI), 111–131 (PWTAFATSLGMAFDILVYTMW), 138–158 (LSIIFGGVAGAAPSLAGWAAA), 166–186 (AIMIALITILWIPSHIWYISI), 218–238 (VLMIILQLLLFLMGPLGPIFL), and 272–292 (SPVEGVIFLAIALDGIFRILW).

Belongs to the UbiA prenyltransferase family. Protoheme IX farnesyltransferase subfamily.

It is found in the cell membrane. The enzyme catalyses heme b + (2E,6E)-farnesyl diphosphate + H2O = Fe(II)-heme o + diphosphate. Its pathway is porphyrin-containing compound metabolism; heme O biosynthesis; heme O from protoheme: step 1/1. In terms of biological role, converts heme B (protoheme IX) to heme O by substitution of the vinyl group on carbon 2 of heme B porphyrin ring with a hydroxyethyl farnesyl side group. The polypeptide is Protoheme IX farnesyltransferase (Korarchaeum cryptofilum (strain OPF8)).